The following is a 4621-amino-acid chain: Dynein axonemal heavy chain 5 (4621 aa).

The segment at 1-1938 (MFRIGRRQLW…MIHITDVAFI (1938 aa)) is stem. Coiled-coil stretches lie at residues 260 to 305 (WIKQ…DQLK) and 803 to 825 (LENA…DLIE). Positions 901–921 (VCHENASPSGNTSGRREGHSE) are disordered. Coiled coils occupy residues 1065 to 1094 (AVKN…SINL) and 1433 to 1462 (DVNI…DWQA). AAA stretches follow at residues 1939-2161 (YQNE…VLRT), 2221-2440 (TAIS…IQNL), 2547-2800 (VYPP…IWQG), and 2913-3167 (LYNE…FRRS). ATP contacts are provided by residues 1977 to 1984 (GPAGTGKT) and 2259 to 2266 (GPSGSGKT). A stalk region spans residues 3182–3479 (YKFIYEEKHM…QTLLEDADRC (298 aa)). Coiled-coil stretches lie at residues 3186-3299 (YEEK…QTIK), 3423-3490 (LKAN…STLI), and 3729-3814 (ILTE…EEYR). AAA regions lie at residues 3564–3794 (LIDA…EVTQ) and 4009–4223 (ARKY…FIQN). A coiled-coil region spans residues 4389–4417 (FLRQEIDRMQRVLSLVRSTLTELKLAVDG).

It belongs to the dynein heavy chain family. Interacts with DNAL1. Consists of at least two heavy chains and a number of intermediate and light chains. Strongly expressed in lung and kidney and weaker expression seen in brain, heart and testis. In the brain, expressed in ependymal cells lining the brain ventricles and the aqueduct.

The protein localises to the cytoplasm. It localises to the cytoskeleton. It is found in the cilium axoneme. Its function is as follows. Force generating protein of respiratory cilia. Produces force towards the minus ends of microtubules. Dynein has ATPase activity; the force-producing power stroke is thought to occur on release of ADP. Required for structural and functional integrity of the cilia of ependymal cells lining the brain ventricles. The polypeptide is Dynein axonemal heavy chain 5 (Mus musculus (Mouse)).